The primary structure comprises 358 residues: PqqA peptide cyclase (358 aa).

The region spanning 4–219 is the Radical SAM core domain; the sequence is PSPPMSLLAE…VEAERAKGGL (216 aa). 3 residues coordinate [4Fe-4S] cluster: cysteine 18, cysteine 22, and cysteine 25.

It belongs to the radical SAM superfamily. PqqE family. As to quaternary structure, interacts with PqqD. The interaction is necessary for activity of PqqE. [4Fe-4S] cluster is required as a cofactor.

The catalysed reaction is [PQQ precursor protein] + S-adenosyl-L-methionine = E-Y cross-linked-[PQQ precursor protein] + 5'-deoxyadenosine + L-methionine + H(+). It participates in cofactor biosynthesis; pyrroloquinoline quinone biosynthesis. In terms of biological role, catalyzes the cross-linking of a glutamate residue and a tyrosine residue in the PqqA protein as part of the biosynthesis of pyrroloquinoline quinone (PQQ). This is PqqA peptide cyclase from Gluconobacter oxydans (strain 621H) (Gluconobacter suboxydans).